The following is an 81-amino-acid chain: MKVAIVFLSLLVLAFASESIEENREEFPVEESARCADINGACKSDCDCCGDSVTCDCYWSDSCKCRESNFKIGMAIRKKFC.

Residues 1–16 (MKVAIVFLSLLVLAFA) form the signal peptide. Positions 17-34 (SESIEENREEFPVEESAR) are excised as a propeptide. Cystine bridges form between cysteine 35–cysteine 49, cysteine 42–cysteine 55, cysteine 46–cysteine 81, cysteine 48–cysteine 65, and cysteine 57–cysteine 63.

It belongs to the neurotoxin 03 (Tx2) family. 05 subfamily. In terms of tissue distribution, expressed by the venom gland.

The protein resides in the secreted. In terms of biological role, this insecticidal neurotoxin targets two types of channels/receptors. It reversibly inhibits the N-methyl-D-aspartate (NMDA)-subtype of ionotropic glutamate receptor (GRIN). It inhibits glutamate uptake from rat brain synaptosomes, and blocks GRIN in hippocampal slices. It also acts on sodium channels of both insects and mammals. On sodium channel insects, it strongly slows down channel inactivation (EC(50)=212.5 nM) and causes an increase (105%) in peak amplitude (at 1 uM) of B.germanica sodium channel (Nav), whereas it inhibits all mammalien sodium channels tested with the following order of potency: Nav1.3/SCN3A (IC(50)=1.5 uM) &gt; Nav1.6/SCN8A &gt; Nav1.5/SCN5A &gt; Nav1.4/SCN4A &gt;= Nav1.2/SCN2A. In vivo, it is highly toxic to house fly (Musca domestica), cockroach (Periplaneta americana), and cricket (Acheta domesticus). In different rat pain models (induced by PGE2, carrageenan or glutamate), it shows antinociceptive effect that may be related to an inhibitory activity on the glutamatergic system. The polypeptide is GAMMA-ctenitoxin-Pn1a (Phoneutria nigriventer (Brazilian armed spider)).